The primary structure comprises 982 residues: Probable beta-galactosidase C (982 aa).

The signal sequence occupies residues 1-21 (MRLFALLPVLLGLISSHFVSA). Substrate contacts are provided by Tyr-80, Asn-125, Ala-126, Glu-127, and Asn-185. Glu-186 (proton donor) is an active-site residue. Substrate is bound at residue Tyr-249. Cys-255 and Cys-302 are oxidised to a cystine. Asn-274 carries an N-linked (GlcNAc...) asparagine glycan. Glu-285 (nucleophile) is an active-site residue. Tyr-351 contacts substrate. Residues Asn-389, Asn-434, Asn-600, Asn-675, Asn-718, and Asn-785 are each glycosylated (N-linked (GlcNAc...) asparagine).

Belongs to the glycosyl hydrolase 35 family.

It is found in the secreted. It catalyses the reaction Hydrolysis of terminal non-reducing beta-D-galactose residues in beta-D-galactosides.. In terms of biological role, cleaves beta-linked terminal galactosyl residues from gangliosides, glycoproteins, and glycosaminoglycans. In Penicillium rubens (strain ATCC 28089 / DSM 1075 / NRRL 1951 / Wisconsin 54-1255) (Penicillium chrysogenum), this protein is Probable beta-galactosidase C (lacC).